A 119-amino-acid polypeptide reads, in one-letter code: Large ribosomal subunit protein uL18 (119 aa).

This sequence belongs to the universal ribosomal protein uL18 family. Part of the 50S ribosomal subunit; part of the 5S rRNA/L5/L18/L25 subcomplex. Contacts the 5S and 23S rRNAs.

Its function is as follows. This is one of the proteins that bind and probably mediate the attachment of the 5S RNA into the large ribosomal subunit, where it forms part of the central protuberance. The chain is Large ribosomal subunit protein uL18 from Cupriavidus metallidurans (strain ATCC 43123 / DSM 2839 / NBRC 102507 / CH34) (Ralstonia metallidurans).